Reading from the N-terminus, the 1407-residue chain is DNA-directed RNA polymerase subunit beta' (1407 aa).

Cysteine 70, cysteine 72, cysteine 85, and cysteine 88 together coordinate Zn(2+). Aspartate 460, aspartate 462, and aspartate 464 together coordinate Mg(2+). Cysteine 814, cysteine 888, cysteine 895, and cysteine 898 together coordinate Zn(2+). At lysine 972 the chain carries N6-acetyllysine.

Belongs to the RNA polymerase beta' chain family. In terms of assembly, the RNAP catalytic core consists of 2 alpha, 1 beta, 1 beta' and 1 omega subunit. When a sigma factor is associated with the core the holoenzyme is formed, which can initiate transcription. Mg(2+) is required as a cofactor. Zn(2+) serves as cofactor.

The enzyme catalyses RNA(n) + a ribonucleoside 5'-triphosphate = RNA(n+1) + diphosphate. Functionally, DNA-dependent RNA polymerase catalyzes the transcription of DNA into RNA using the four ribonucleoside triphosphates as substrates. This chain is DNA-directed RNA polymerase subunit beta', found in Shigella sonnei (strain Ss046).